We begin with the raw amino-acid sequence, 822 residues long: uncharacterized protein (822 aa).

Over 1–13 (MCHNSVRSGNKAG) the chain is Cytoplasmic. Residues 14–34 (FLGIKFGSALLSIATGAIAIA) traverse the membrane as a helical segment. At 35–44 (LLCKFHDHEA) the chain is on the extracellular side. Residues 45 to 65 (VLIVIVCSTLLYGIPSLISFI) form a helical membrane-spanning segment. Residues 66 to 76 (TETVFAPSKFH) are Cytoplasmic-facing. The helical transmembrane segment at 77 to 97 (IGYFYNVLNFALPLITMGCTV) threads the bilayer. Topologically, residues 98-120 (DYFHNTLRSPISVQSESHRVYIT) are extracellular. A helical transmembrane segment spans residues 121-141 (TLDSLLIFTLFINGIQLGFFL). At 142 to 822 (KDGNANNFGS…PVEELVSPSK (681 aa)) the chain is on the cytoplasmic side. A disordered region spans residues 271–290 (RNTQQATKVPTEKKSNHRSS). Residue Ser-690 is modified to Phosphoserine. A compositionally biased stretch (polar residues) spans 698–712 (TLQSSHSPTKSTSGN). Disordered regions lie at residues 698 to 728 (TLQS…STVN) and 751 to 783 (NGEE…GYPE). The span at 761–776 (QSIQSSSSGSEQESAG) shows a compositional bias: low complexity.

It localises to the membrane. This is an uncharacterized protein from Saccharomyces cerevisiae (strain ATCC 204508 / S288c) (Baker's yeast).